A 341-amino-acid polypeptide reads, in one-letter code: MIKLNQIVKRYHTKDKDVLAVDHVDLNIESGSIFGVIGFSGAGKSTLIRMFNNLESPTSGEIIIDGDNISQLSKSQLRKKRQKVSMIFQHFNLLWSRNVLKNVTFPLEIAGVPSGLAKQKALELIELVGLKGRESAYPSELSGGQKQRVGIARALANDPDVLLCDEATSALDPQTTDEILDLLLKVREQQNLTIVLITHEMHVIRRMCDEVAVMENGKVIEQGAVSKVFENPQHEVTKRFVKDDLNDDFEDSLEYLEPLDHDAYIVRLNFTGENTTEPIISYMTKTHNIDVNILEADIKNTKNGSLGFLVIHIPHISEEHFKQFKHNLHEQHVNVEVLKHG.

Residues 2-241 enclose the ABC transporter domain; it reads IKLNQIVKRY…PQHEVTKRFV (240 aa). An ATP-binding site is contributed by 38–45; sequence GFSGAGKS.

The protein belongs to the ABC transporter superfamily. Methionine importer (TC 3.A.1.24) family. As to quaternary structure, the complex is composed of two ATP-binding proteins (MetN), two transmembrane proteins (MetI) and a solute-binding protein (MetQ).

It localises to the cell membrane. It catalyses the reaction L-methionine(out) + ATP + H2O = L-methionine(in) + ADP + phosphate + H(+). The catalysed reaction is D-methionine(out) + ATP + H2O = D-methionine(in) + ADP + phosphate + H(+). In terms of biological role, part of the ABC transporter complex MetNIQ involved in methionine import. Responsible for energy coupling to the transport system. This chain is Methionine import ATP-binding protein MetN 1, found in Staphylococcus epidermidis (strain ATCC 12228 / FDA PCI 1200).